A 581-amino-acid chain; its full sequence is 2-succinyl-5-enolpyruvyl-6-hydroxy-3-cyclohexene-1-carboxylate synthase (581 aa).

The protein belongs to the TPP enzyme family. MenD subfamily. As to quaternary structure, homodimer. Mg(2+) serves as cofactor. The cofactor is Mn(2+). Requires thiamine diphosphate as cofactor.

It catalyses the reaction isochorismate + 2-oxoglutarate + H(+) = 5-enolpyruvoyl-6-hydroxy-2-succinyl-cyclohex-3-ene-1-carboxylate + CO2. It functions in the pathway quinol/quinone metabolism; 1,4-dihydroxy-2-naphthoate biosynthesis; 1,4-dihydroxy-2-naphthoate from chorismate: step 2/7. Its pathway is quinol/quinone metabolism; menaquinone biosynthesis. Its function is as follows. Catalyzes the thiamine diphosphate-dependent decarboxylation of 2-oxoglutarate and the subsequent addition of the resulting succinic semialdehyde-thiamine pyrophosphate anion to isochorismate to yield 2-succinyl-5-enolpyruvyl-6-hydroxy-3-cyclohexene-1-carboxylate (SEPHCHC). This Psychromonas ingrahamii (strain DSM 17664 / CCUG 51855 / 37) protein is 2-succinyl-5-enolpyruvyl-6-hydroxy-3-cyclohexene-1-carboxylate synthase.